The sequence spans 948 residues: Valine--tRNA ligase (948 aa).

Positions 40–50 match the 'HIGH' region motif; that stretch reads PNVTGSLHMGH. The 'KMSKS' region signature appears at 551–555; that stretch reads KMSKS. Lysine 554 contacts ATP. The stretch at 879 to 945 forms a coiled coil; that stretch reads LIDKGAELAR…GKLAEQHARI (67 aa).

The protein belongs to the class-I aminoacyl-tRNA synthetase family. ValS type 1 subfamily. As to quaternary structure, monomer.

It is found in the cytoplasm. It carries out the reaction tRNA(Val) + L-valine + ATP = L-valyl-tRNA(Val) + AMP + diphosphate. In terms of biological role, catalyzes the attachment of valine to tRNA(Val). As ValRS can inadvertently accommodate and process structurally similar amino acids such as threonine, to avoid such errors, it has a 'posttransfer' editing activity that hydrolyzes mischarged Thr-tRNA(Val) in a tRNA-dependent manner. The chain is Valine--tRNA ligase from Pseudomonas savastanoi pv. phaseolicola (strain 1448A / Race 6) (Pseudomonas syringae pv. phaseolicola (strain 1448A / Race 6)).